We begin with the raw amino-acid sequence, 223 residues long: NLP effector protein 2 (223 aa).

Residues 90–100 (AIMYSWYFPKD) carry the Conserved undecapeptide motif motif. Residues 107 to 113 (GHRHDWE) carry the Conserved p motif motif.

Belongs to the Necrosis inducing protein (NPP1) family.

It localises to the secreted. Its subcellular location is the host cytoplasm. In terms of biological role, probable secreted effector that may act as a pathogen-associated molecular pattern (PAMP) recognized by the plant immune system. Seems not to induce necrosis, neither in several susceptible or resistant Vitis species nor in the dicot model plant Nicotiana benthamiana. The sequence is that of NLP effector protein 2 from Plasmopara viticola (Downy mildew of grapevine).